The chain runs to 569 residues: Proline--tRNA ligase (569 aa).

Belongs to the class-II aminoacyl-tRNA synthetase family. ProS type 1 subfamily. As to quaternary structure, homodimer.

It is found in the cytoplasm. It catalyses the reaction tRNA(Pro) + L-proline + ATP = L-prolyl-tRNA(Pro) + AMP + diphosphate. Functionally, catalyzes the attachment of proline to tRNA(Pro) in a two-step reaction: proline is first activated by ATP to form Pro-AMP and then transferred to the acceptor end of tRNA(Pro). As ProRS can inadvertently accommodate and process non-cognate amino acids such as alanine and cysteine, to avoid such errors it has two additional distinct editing activities against alanine. One activity is designated as 'pretransfer' editing and involves the tRNA(Pro)-independent hydrolysis of activated Ala-AMP. The other activity is designated 'posttransfer' editing and involves deacylation of mischarged Ala-tRNA(Pro). The misacylated Cys-tRNA(Pro) is not edited by ProRS. This chain is Proline--tRNA ligase, found in Legionella pneumophila (strain Paris).